Reading from the N-terminus, the 116-residue chain is Large ribosomal subunit protein uL18 (116 aa).

Belongs to the universal ribosomal protein uL18 family. In terms of assembly, part of the 50S ribosomal subunit; part of the 5S rRNA/L5/L18/L25 subcomplex. Contacts the 5S and 23S rRNAs.

This is one of the proteins that bind and probably mediate the attachment of the 5S RNA into the large ribosomal subunit, where it forms part of the central protuberance. This is Large ribosomal subunit protein uL18 from Azotobacter vinelandii (strain DJ / ATCC BAA-1303).